Here is a 250-residue protein sequence, read N- to C-terminus: GILT-like protein 1 (250 aa).

The N-terminal stretch at methionine 1–serine 21 is a signal peptide. A glycan (N-linked (GlcNAc...) asparagine) is linked at asparagine 157.

It belongs to the GILT family. Post-translationally, conjugated to URM1, a ubiquitin-like protein.

The protein localises to the secreted. Its function is as follows. Involved in the immune response to bacterial infection. This Drosophila melanogaster (Fruit fly) protein is GILT-like protein 1.